Reading from the N-terminus, the 112-residue chain is uncharacterized protein (112 aa).

This sequence to M.jannaschii MJ1244 and M.thermoautotrophicum MTH1110.

This is an uncharacterized protein from Methanocaldococcus jannaschii (strain ATCC 43067 / DSM 2661 / JAL-1 / JCM 10045 / NBRC 100440) (Methanococcus jannaschii).